Here is an 85-residue protein sequence, read N- to C-terminus: Small ribosomal subunit protein bS16c (85 aa).

This sequence belongs to the bacterial ribosomal protein bS16 family.

The protein localises to the plastid. It is found in the chloroplast. In Saccharum hybrid (Sugarcane), this protein is Small ribosomal subunit protein bS16c.